A 391-amino-acid chain; its full sequence is Probable FAD-dependent oxidoreductase PA4991 (391 aa).

Residues alanine 17, glutamate 36, 44 to 45 (QS), 49 to 51 (QGI), and 346 to 347 (LA) contribute to the FAD site.

This sequence belongs to the DAO family. In terms of assembly, monomer. Requires FAD as cofactor.

Its function is as follows. Probably functions as a FAD-dependent oxidoreductase, whose physiological substrate is unknown. Does not display amino-acid oxidase or glycerol-3-phosphate dehydrogenase activities. Is essential for growth of P.aeruginosa in the sputum of cystic fibrosis patients. The sequence is that of Probable FAD-dependent oxidoreductase PA4991 from Pseudomonas aeruginosa (strain ATCC 15692 / DSM 22644 / CIP 104116 / JCM 14847 / LMG 12228 / 1C / PRS 101 / PAO1).